Consider the following 274-residue polypeptide: uncharacterized protein (274 aa).

The protein localises to the plastid. Its subcellular location is the chloroplast. This is an uncharacterized protein from Euglena gracilis.